Here is a 287-residue protein sequence, read N- to C-terminus: Xyloglucan endotransglucosylase protein 1 (287 aa).

An N-terminal signal peptide occupies residues 1–28; the sequence is MAFMSFINGFSTLFLVALLASSMMAAKG. Positions 29-219 constitute a GH16 domain; that stretch reads GNFYQDFDVT…WTKAPFTAYY (191 aa). The Nucleophile role is filled by glutamate 105. Residue glutamate 109 is the Proton donor of the active site. Glutamate 109 is a xyloglucan binding site. Asparagine 113 carries N-linked (GlcNAc...) asparagine glycosylation. Residues 122-124, 132-134, 198-199, and glycine 203 contribute to the xyloglucan site; these read HTN, NRE, and DW. 2 cysteine pairs are disulfide-bonded: cysteine 227–cysteine 231 and cysteine 266–cysteine 280. Position 271 (arginine 271) interacts with xyloglucan.

Belongs to the glycosyl hydrolase 16 family. XTH group 2 subfamily. In terms of processing, contains at least one intrachain disulfide bond essential for its enzymatic activity. Expressed in fruit pulp. Expressed in leaves, flowers, calyces, stems and fruits. Highest expression in leaves and lowest in fruits.

The protein localises to the secreted. It localises to the cell wall. The protein resides in the extracellular space. Its subcellular location is the apoplast. It catalyses the reaction breaks a beta-(1-&gt;4) bond in the backbone of a xyloglucan and transfers the xyloglucanyl segment on to O-4 of the non-reducing terminal glucose residue of an acceptor, which can be a xyloglucan or an oligosaccharide of xyloglucan.. Functionally, catalyzes xyloglucan endotransglycosylation (XET). Cleaves and religates xyloglucan polymers. Does not catalyze xyloglucan endohydrolysis (XEH). Overexpression in Arabidopsis transgenic plants results in elevated tolerance to abiotic stress, such as salt, ABA (abscisic acid) and drought stresses, and in the production of wider leaves. Overexpression in transgenic tomato plants slows down fruit ripening and softening, and the plants produce larger fruits. Both transgenic plants have larger and more irregular cells. Moreover, the fruits of the transgenic tomato have higher density of cell wall and intercellular spaces. May provide cells with more strength and thickness to maintain structural integrity. Probably involved in cell wall assembly and synthesis in fast growing tissues and in the maintenance of firmness in mature fruits. This chain is Xyloglucan endotransglucosylase protein 1, found in Diospyros kaki (Kaki persimmon).